Reading from the N-terminus, the 333-residue chain is NAC domain-containing protein 26 (333 aa).

Positions 14 to 173 (LPPGFRFHPT…DWAVCRIFHK (160 aa)) constitute an NAC domain. The DNA-binding element occupies 114–179 (IGMKKTLVFY…IFHKSSGIKK (66 aa)). The disordered stretch occupies residues 143 to 162 (ADASPPQPPPPPSSAEPPRQ). Residues 147–157 (PPQPPPPPSSA) show a composition bias toward pro residues.

In terms of assembly, forms homodimers. Forms heterodimers with NAC20. Forms heterodimers with NAC23. In terms of tissue distribution, expressed in developing seeds.

It is found in the nucleus. Transcription factor that acts redundantly with NAC20 to regulate the expression of genes involved in the biosynthesis of starch and storage proteins in grain. Directly binds to the promoters of starch synthase 1 (SS1), pullulanase (PUL), glutelin A1 (GLUA1), glutelins B4 and B5 (GLUB4 and GLUB5), alpha-globulin and 16 kDa prolamin, and activates their expression. Possesses transactivation activity in yeast. This is NAC domain-containing protein 26 from Oryza sativa subsp. indica (Rice).